Here is a 560-residue protein sequence, read N- to C-terminus: NADH-quinone oxidoreductase subunit C/D (560 aa).

An NADH dehydrogenase I subunit C region spans residues 2-157; that stretch reads NKLENLKQLL…NNQQACTNSL (156 aa). The tract at residues 175-560 is NADH dehydrogenase I subunit D; the sequence is KYLPLNIGPS…MNLIAGELDR (386 aa).

It in the N-terminal section; belongs to the complex I 30 kDa subunit family. This sequence in the C-terminal section; belongs to the complex I 49 kDa subunit family. In terms of assembly, NDH-1 is composed of 13 different subunits. Subunits NuoB, CD, E, F, and G constitute the peripheral sector of the complex.

Its subcellular location is the cytoplasm. The protein localises to the cell inner membrane. The catalysed reaction is a quinone + NADH + 5 H(+)(in) = a quinol + NAD(+) + 4 H(+)(out). Its function is as follows. NDH-1 shuttles electrons from NADH, via FMN and iron-sulfur (Fe-S) centers, to quinones in the respiratory chain. The immediate electron acceptor for the enzyme in this species is believed to be ubiquinone. Couples the redox reaction to proton translocation (for every two electrons transferred, four hydrogen ions are translocated across the cytoplasmic membrane), and thus conserves the redox energy in a proton gradient. This Bdellovibrio bacteriovorus (strain ATCC 15356 / DSM 50701 / NCIMB 9529 / HD100) protein is NADH-quinone oxidoreductase subunit C/D.